The following is a 284-amino-acid chain: Tryptophan 2,3-dioxygenase (284 aa).

Residues Phe51–His55, Tyr113, and Arg117 each bind substrate. Heme is bound at residue His240. A substrate-binding site is contributed by Thr254.

This sequence belongs to the tryptophan 2,3-dioxygenase family. Homotetramer. It depends on heme as a cofactor.

It carries out the reaction L-tryptophan + O2 = N-formyl-L-kynurenine. The protein operates within amino-acid degradation; L-tryptophan degradation via kynurenine pathway; L-kynurenine from L-tryptophan: step 1/2. Heme-dependent dioxygenase that catalyzes the oxidative cleavage of the L-tryptophan (L-Trp) pyrrole ring and converts L-tryptophan to N-formyl-L-kynurenine. Catalyzes the oxidative cleavage of the indole moiety. In Rhodococcus jostii (strain RHA1), this protein is Tryptophan 2,3-dioxygenase.